The primary structure comprises 118 residues: UPF0058 protein MJ1132 (118 aa).

It belongs to the UPF0058 family.

The chain is UPF0058 protein MJ1132 from Methanocaldococcus jannaschii (strain ATCC 43067 / DSM 2661 / JAL-1 / JCM 10045 / NBRC 100440) (Methanococcus jannaschii).